Reading from the N-terminus, the 820-residue chain is Leucine--tRNA ligase (820 aa).

Positions 42–52 match the 'HIGH' region motif; sequence PYPSGDLHMGH. The 'KMSKS' region signature appears at 576–580; it reads KMSKS. Lys-579 provides a ligand contact to ATP.

The protein belongs to the class-I aminoacyl-tRNA synthetase family.

Its subcellular location is the cytoplasm. It carries out the reaction tRNA(Leu) + L-leucine + ATP = L-leucyl-tRNA(Leu) + AMP + diphosphate. The polypeptide is Leucine--tRNA ligase (Coxiella burnetii (strain Dugway 5J108-111)).